The chain runs to 138 residues: Large ribosomal subunit protein uL16 (138 aa).

Over residues 1–16 (MLIPRRVKHRKQHHPG) the composition is skewed to basic residues. The disordered stretch occupies residues 1 to 25 (MLIPRRVKHRKQHHPGRSGQATGGT).

It belongs to the universal ribosomal protein uL16 family. In terms of assembly, part of the 50S ribosomal subunit.

Its function is as follows. Binds 23S rRNA and is also seen to make contacts with the A and possibly P site tRNAs. The sequence is that of Large ribosomal subunit protein uL16 from Renibacterium salmoninarum (strain ATCC 33209 / DSM 20767 / JCM 11484 / NBRC 15589 / NCIMB 2235).